Reading from the N-terminus, the 2833-residue chain is Reticulocyte-binding protein 1 (2833 aa).

Positions 1-22 are cleaved as a signal peptide; sequence MKRGICLAALLCLFNYLGAGHG. Residues 75–91 show a composition bias toward basic and acidic residues; it reads ETDNASGKDAEGSRPSH. Disordered regions lie at residues 75–95, 112–133, and 819–860; these read ETDNASGKDAEGSRPSHDSSF, HVKESTPHSTTRESTEKGKENE, and KHKQ…NFSR. Residues 819-836 show a composition bias toward basic and acidic residues; it reads KHKQNRSEKEEEYFKNES. The span at 837-849 shows a compositional bias: acidic residues; that stretch reads VEEDLSREETEEQ. Residues 2563–2565 carry the Cell attachment site motif; the sequence is RGD. Positions 2619–2755 are disordered; that stretch reads EMNSKKSAIE…GTYQDTSNSS (137 aa). Composition is skewed to basic and acidic residues over residues 2621-2633 and 2640-2652; these read NSKKSAIEKEKTA and ENNRREEEERARV. Residues 2655–2670 are compositionally biased toward polar residues; that stretch reads MSMNNDPTQSETTHSE. The segment covering 2706 to 2720 has biased composition (acidic residues); the sequence is LEEEETTAPMEETEM. Over residues 2731–2742 the composition is skewed to basic and acidic residues; it reads TRSDEPDMHTEN. Residues 2743 to 2755 show a composition bias toward polar residues; it reads TQDGTYQDTSNSS.

In terms of assembly, homodimer.

It localises to the membrane. Involved in reticulocyte adhesion. Specifically binds to human reticulocyte cells. This is Reticulocyte-binding protein 1 (RBP1) from Plasmodium vivax (strain Belem).